The primary structure comprises 299 residues: MVRCLGPALLLLLLLGSASSVGGNRCVDAAEACTADARCQRLRSEYVAQCLGRAAQGGCPRARCRRALRRFFARGPPALTHALLFCPCAGPACAERRRQTFVPSCAFSGPGPAPPSCLEPLNFCERSRVCRCARAAAGPWRGWGRGLSPAHRPPAAQASPPGLSGLVHPSAQRPRRLPAGPGRPLPARLRGPRGVPAGTAVTPNYVDNVSARVAPWCDCGASGNRREDCEAFRGLFTRNRCLDGAIQAFASGWPPVLLDQLNPQGDPEHSLLQVSSTGRALERRSLLSILPVLALPALL.

The N-terminal stretch at 1-20 is a signal peptide; it reads MVRCLGPALLLLLLLGSASS. The disordered stretch occupies residues 145–198; the sequence is RGLSPAHRPPAAQASPPGLSGLVHPSAQRPRRLPAGPGRPLPARLRGPRGVPAG. Residues 177–198 show a composition bias toward low complexity; that stretch reads LPAGPGRPLPARLRGPRGVPAG. A glycan (N-linked (GlcNAc...) asparagine) is linked at Asn208. Gly278 carries GPI-anchor amidated glycine lipidation. The propeptide at 279 to 299 is removed in mature form; that stretch reads RALERRSLLSILPVLALPALL.

Belongs to the GDNFR family. Interacts with ARTN ligand and RET: forms a 2:2:2 ternary complex composed of ARTN ligand, GFRA3 and RET receptor. Interacts with SORL1. As to expression, predominantly expressed in the adult thyroid gland. Low levels also found in fetal adrenal and thyroid glands.

The protein resides in the cell membrane. The protein localises to the secreted. Receptor for persephin (PSPN), a growth factor that exhibits neurotrophic activity on mesencephalic dopaminergic and motor neurons. Acts by binding to its coreceptor, GFRA4, leading to autophosphorylation and activation of the RET receptor. May be important in C-cell development and, in the postnatal development of the adrenal medulla. The chain is GDNF family receptor alpha-4 (GFRA4) from Homo sapiens (Human).